We begin with the raw amino-acid sequence, 150 residues long: Large ribosomal subunit protein uL13 (150 aa).

It belongs to the universal ribosomal protein uL13 family. In terms of assembly, part of the 50S ribosomal subunit.

Its function is as follows. This protein is one of the early assembly proteins of the 50S ribosomal subunit, although it is not seen to bind rRNA by itself. It is important during the early stages of 50S assembly. This Chlorobaculum parvum (strain DSM 263 / NCIMB 8327) (Chlorobium vibrioforme subsp. thiosulfatophilum) protein is Large ribosomal subunit protein uL13.